The chain runs to 474 residues: Vitamin D-binding protein (474 aa).

Residues 1–16 form the signal peptide; it reads MKRVLVLLLAVAFGHA. 3 Albumin domains span residues 17–208, 209–394, and 395–474; these read LERG…QLKH, LSLL…LLKK, and ELSS…KNIL. Disulfide bonds link Cys-29–Cys-75, Cys-74–Cys-83, Cys-96–Cys-112, Cys-111–Cys-122, Cys-145–Cys-190, Cys-189–Cys-198, Cys-220–Cys-266, Cys-265–Cys-273, Cys-286–Cys-300, Cys-299–Cys-311, Cys-335–Cys-376, Cys-375–Cys-384, Cys-407–Cys-453, and Cys-452–Cys-462.

It belongs to the ALB/AFP/VDB family. As to quaternary structure, associates with membrane-bound immunoglobulin on the surface of B-lymphocytes and with IgG Fc receptor on the membranes of T-lymphocytes. Interacts with LRP2; the interaction is required for renal uptake of GC in complex with 25-hydroxyvitamin D3. Post-translationally, allele GC*1S is O-glycosylated at Thr-436. The trisaccharide sugar moiety can be modified by the successive removal of neuraminic acid and galactose leaving an O-mceeN-acetyl-galactosamine. This conversion is thought to produce a macrophage-activating factor (Gc-MAF). Only a minor proportion of plasma GC is O-glycosylated. The potential N-glycosylation site predicted at Asn-288 is thought to be nonglycosylated. As to expression, expressed in the liver. Found in plasma, ascites, cerebrospinal fluid and urine.

It localises to the secreted. In terms of biological role, involved in vitamin D transport and storage, scavenging of extracellular G-actin, enhancement of the chemotactic activity of C5 alpha for neutrophils in inflammation and macrophage activation. The protein is Vitamin D-binding protein (GC) of Homo sapiens (Human).